The chain runs to 141 residues: Small ribosomal subunit protein uS12 (141 aa).

It belongs to the universal ribosomal protein uS12 family. Part of the 30S ribosomal subunit.

Its function is as follows. With S4 and S5 plays an important role in translational accuracy. Located at the interface of the 30S and 50S subunits. In Methanobrevibacter smithii (strain ATCC 35061 / DSM 861 / OCM 144 / PS), this protein is Small ribosomal subunit protein uS12.